The primary structure comprises 176 residues: MLRLTAGRVRSLLAGRATAAFSTSSARMASHDLEVAESVDMSKPLYWDRLDTPLPDRPYKEDLTAADKSLKQKEKGPWGQLSKEEKIALYRLMFCQTYSEMKQPSSEWKTVFGGIFIFLGFTGLVVWWQALYVYPPRPRTFDDEWKAKQLKRMLDMRVNPIEGFSAKWDYEKGQWK.

A mitochondrion-targeting transit peptide spans 1 to 28; that stretch reads MLRLTAGRVRSLLAGRATAAFSTSSARM. At 29 to 106 the chain is on the mitochondrial matrix side; sequence ASHDLEVAES…TYSEMKQPSS (78 aa). Residues 107–132 form a helical membrane-spanning segment; it reads EWKTVFGGIFIFLGFTGLVVWWQALY. Residues 133–176 are Mitochondrial intermembrane-facing; sequence VYPPRPRTFDDEWKAKQLKRMLDMRVNPIEGFSAKWDYEKGQWK.

This sequence belongs to the cytochrome c oxidase IV family. Component of the cytochrome c oxidase (complex IV, CIV), a multisubunit enzyme composed of 14 subunits. The complex is composed of a catalytic core of 3 subunits MT-CO1, MT-CO2 and MT-CO3, encoded in the mitochondrial DNA, and 11 supernumerary subunits COX4I, COX5A, COX5B, COX6A, COX6B, COX6C, COX7A, COX7B, COX7C, COX8 and NDUFA4, which are encoded in the nuclear genome. The complex exists as a monomer or a dimer and forms supercomplexes (SCs) in the inner mitochondrial membrane with NADH-ubiquinone oxidoreductase (complex I, CI) and ubiquinol-cytochrome c oxidoreductase (cytochrome b-c1 complex, complex III, CIII), resulting in different assemblies (supercomplex SCI(1)III(2)IV(1) and megacomplex MCI(2)III(2)IV(2)).

It localises to the mitochondrion inner membrane. It functions in the pathway energy metabolism; oxidative phosphorylation. In terms of biological role, component of the cytochrome c oxidase, the last enzyme in the mitochondrial electron transport chain which drives oxidative phosphorylation. The respiratory chain contains 3 multisubunit complexes succinate dehydrogenase (complex II, CII), ubiquinol-cytochrome c oxidoreductase (cytochrome b-c1 complex, complex III, CIII) and cytochrome c oxidase (complex IV, CIV), that cooperate to transfer electrons derived from NADH and succinate to molecular oxygen, creating an electrochemical gradient over the inner membrane that drives transmembrane transport and the ATP synthase. Cytochrome c oxidase is the component of the respiratory chain that catalyzes the reduction of oxygen to water. Electrons originating from reduced cytochrome c in the intermembrane space (IMS) are transferred via the dinuclear copper A center (CU(A)) of subunit 2 and heme A of subunit 1 to the active site in subunit 1, a binuclear center (BNC) formed by heme A3 and copper B (CU(B)). The BNC reduces molecular oxygen to 2 water molecules using 4 electrons from cytochrome c in the IMS and 4 protons from the mitochondrial matrix. This Thunnus obesus (Bigeye tuna) protein is Cytochrome c oxidase subunit 4 isoform 2, mitochondrial.